The primary structure comprises 314 residues: Porphobilinogen deaminase (314 aa).

At cysteine 241 the chain carries S-(dipyrrolylmethanemethyl)cysteine.

Belongs to the HMBS family. In terms of assembly, monomer. Requires dipyrromethane as cofactor.

It carries out the reaction 4 porphobilinogen + H2O = hydroxymethylbilane + 4 NH4(+). It participates in porphyrin-containing compound metabolism; protoporphyrin-IX biosynthesis; coproporphyrinogen-III from 5-aminolevulinate: step 2/4. The protein operates within porphyrin-containing compound metabolism; chlorophyll biosynthesis. Functionally, tetrapolymerization of the monopyrrole PBG into the hydroxymethylbilane pre-uroporphyrinogen in several discrete steps. The polypeptide is Porphobilinogen deaminase (Chloroherpeton thalassium (strain ATCC 35110 / GB-78)).